We begin with the raw amino-acid sequence, 1036 residues long: KAT8 regulatory NSL complex subunit 1 (1036 aa).

At Lys104 the chain carries N6-acetyllysine. Disordered stretches follow at residues 145-211 (GQTA…CTLP) and 226-257 (NSTANKSSVNSMDQPALQGSSRLSPSTDSSSN). Residues 226–244 (NSTANKSSVNSMDQPALQG) are compositionally biased toward polar residues. The span at 245–256 (SSRLSPSTDSSS) shows a compositional bias: low complexity. At Ser249 the chain carries Phosphoserine. Lys262 is covalently cross-linked (Glycyl lysine isopeptide (Lys-Gly) (interchain with G-Cter in SUMO2)). Ser268 carries the phosphoserine modification. Positions 285-312 (TALLRRQADIEIRARRLQKRLQVVQAKQ) form a coiled coil. A Glycyl lysine isopeptide (Lys-Gly) (interchain with G-Cter in SUMO2) cross-link involves residue Lys331. Disordered stretches follow at residues 399–423 (DSDVTDSSSGGESDIEEEELTRADP) and 739–787 (SPSY…RRRG). A compositionally biased stretch (low complexity) spans 759-772 (STSSDTSTPTSSGS). The interval 781 to 813 (PVRRRRGESSFDINNIVIPMSVAATTRVEKLQY) is required for activation of KAT8 histone acetyltransferase activity. The PEHE domain maps to 815 to 966 (EILTPSWREV…GLDEQSVQPW (152 aa)). An interaction with KAT8 HAT domain region spans residues 841-859 (EDLSDAAFAALHAKCEEME). Residues 869–931 (VPPQRRGSRS…SPISPELHSA (63 aa)) are disordered. The segment covering 886 to 896 (TTPQLGSANPS) has biased composition (polar residues). Residues 906 to 919 (SSSHSLSEFSHGQS) are compositionally biased toward low complexity. A phosphoserine mark is found at Ser922 and Ser925. Thr934 bears the Phosphothreonine mark. At Ser976 the chain carries Phosphoserine. Residues 989 to 1020 (DTAARCTRRTSGSKTGREAEVAPTSPPVVPLK) form a disordered region.

In terms of assembly, component of the NSL complex at least composed of MOF/KAT8, KANSL1, KANSL2, KANSL3, MCRS1, PHF20, OGT1/OGT, WDR5 and HCFC1. Interacts (via PEHE domain) with KAT8 (via HAT domain); the interaction is direct. Component of some MLL1/MLL complex, at least composed of the core components KMT2A/MLL1, ASH2L, HCFC1, WDR5 and RBBP5, as well as the facultative components BACC1, CHD8, E2F6, HSP70, INO80C, KANSL1, LAS1L, MAX, MCRS1, MGA, KAT8/MOF, PELP1, PHF20, PRP31, RING2, RUVB1/TIP49A, RUVB2/TIP49B, SENP3, TAF1, TAF4, TAF6, TAF7, TAF9 and TEX10.

The protein localises to the nucleus. Its subcellular location is the chromosome. It is found in the centromere. The protein resides in the kinetochore. It localises to the mitochondrion. The protein localises to the cytoplasm. Its subcellular location is the cytoskeleton. It is found in the spindle pole. In terms of biological role, non-catalytic component of the NSL histone acetyltransferase complex, a multiprotein complex that mediates histone H4 acetylation at 'Lys-5'- and 'Lys-8' (H4K5ac and H4K8ac) at transcription start sites and promotes transcription initiation. The NSL complex also acts as a regulator of gene expression in mitochondria. In addition to its role in transcription, KANSL1 also plays an essential role in spindle assembly during mitosis. Associates with microtubule ends and contributes to microtubule stability. This is KAT8 regulatory NSL complex subunit 1 (Kansl1) from Mus musculus (Mouse).